Here is a 198-residue protein sequence, read N- to C-terminus: Nucleoid occlusion factor SlmA (198 aa).

In terms of domain architecture, HTH tetR-type spans 10 to 70 (NRREEILQSL…SLIEFIEDSL (61 aa)). Residues 33-52 (TTAKLAASVGVSEAALYRHF) constitute a DNA-binding region (H-T-H motif). A coiled-coil region spans residues 117–145 (EQDKLQGRINQLFERIEAQLRQVLREKKM).

Belongs to the nucleoid occlusion factor SlmA family. As to quaternary structure, homodimer. Interacts with FtsZ.

It is found in the cytoplasm. Its subcellular location is the nucleoid. Its function is as follows. Required for nucleoid occlusion (NO) phenomenon, which prevents Z-ring formation and cell division over the nucleoid. Acts as a DNA-associated cell division inhibitor that binds simultaneously chromosomal DNA and FtsZ, and disrupts the assembly of FtsZ polymers. SlmA-DNA-binding sequences (SBS) are dispersed on non-Ter regions of the chromosome, preventing FtsZ polymerization at these regions. In Enterobacter sp. (strain 638), this protein is Nucleoid occlusion factor SlmA.